The chain runs to 311 residues: Probable deoxyhypusine synthase (311 aa).

The active-site Nucleophile is the lysine 284.

It belongs to the deoxyhypusine synthase family. NAD(+) is required as a cofactor.

It catalyses the reaction [eIF5A protein]-L-lysine + spermidine = [eIF5A protein]-deoxyhypusine + propane-1,3-diamine. The protein operates within protein modification; eIF5A hypusination. In terms of biological role, catalyzes the NAD-dependent oxidative cleavage of spermidine and the subsequent transfer of the butylamine moiety of spermidine to the epsilon-amino group of a specific lysine residue of the eIF-5A precursor protein to form the intermediate deoxyhypusine residue. This is Probable deoxyhypusine synthase (dys) from Sulfurisphaera tokodaii (strain DSM 16993 / JCM 10545 / NBRC 100140 / 7) (Sulfolobus tokodaii).